The chain runs to 125 residues: Large-conductance mechanosensitive channel (125 aa).

A run of 3 helical transmembrane segments spans residues 19–39 (VGVI…KYII), 42–62 (FLGL…IGNA), and 66–86 (VGSF…VFLM).

The protein belongs to the MscL family. Homopentamer.

The protein resides in the cell membrane. In terms of biological role, channel that opens in response to stretch forces in the membrane lipid bilayer. May participate in the regulation of osmotic pressure changes within the cell. This is Large-conductance mechanosensitive channel from Ligilactobacillus salivarius (strain UCC118) (Lactobacillus salivarius).